Reading from the N-terminus, the 86-residue chain is Toxin Tpa5 (86 aa).

An N-terminal signal peptide occupies residues 1–20; it reads MSIFPIALALLLIGLEEGEA. The LCN-type CS-alpha/beta domain maps to 22-85; sequence RDGYPISKNN…WGDPGTPPCM (64 aa). 4 disulfides stabilise this stretch: C33–C84, C37–C58, C43–C64, and C47–C66.

Belongs to the long (4 C-C) scorpion toxin superfamily. Sodium channel inhibitor family. Beta subfamily. In terms of tissue distribution, expressed by the venom gland.

Its subcellular location is the secreted. In terms of biological role, beta toxins bind voltage-independently at site-4 of sodium channels (Nav) and shift the voltage of activation toward more negative potentials thereby affecting sodium channel activation and promoting spontaneous and repetitive firing. The polypeptide is Toxin Tpa5 (Tityus pachyurus (Colombian scorpion)).